The chain runs to 472 residues: Adenosylhomocysteinase (472 aa).

Positions 61, 136, and 196 each coordinate substrate. Threonine 197–threonine 199 is an NAD(+) binding site. Substrate-binding residues include lysine 226 and aspartate 230. NAD(+) contacts are provided by residues asparagine 231, glycine 260 to glycine 265, glutamate 283, asparagine 318, isoleucine 339 to histidine 341, and asparagine 384.

Belongs to the adenosylhomocysteinase family. It depends on NAD(+) as a cofactor.

The protein resides in the cytoplasm. The catalysed reaction is S-adenosyl-L-homocysteine + H2O = L-homocysteine + adenosine. Its pathway is amino-acid biosynthesis; L-homocysteine biosynthesis; L-homocysteine from S-adenosyl-L-homocysteine: step 1/1. May play a key role in the regulation of the intracellular concentration of adenosylhomocysteine. The protein is Adenosylhomocysteinase of Cupriavidus necator (strain ATCC 17699 / DSM 428 / KCTC 22496 / NCIMB 10442 / H16 / Stanier 337) (Ralstonia eutropha).